A 235-amino-acid chain; its full sequence is Orotidine 5'-phosphate decarboxylase (235 aa).

Residues D10, K33, 60-69 (DLKMNDIPNT), T123, R185, Q194, G214, and R215 each bind substrate. K62 acts as the Proton donor in catalysis.

This sequence belongs to the OMP decarboxylase family. Type 1 subfamily. As to quaternary structure, homodimer.

The catalysed reaction is orotidine 5'-phosphate + H(+) = UMP + CO2. The protein operates within pyrimidine metabolism; UMP biosynthesis via de novo pathway; UMP from orotate: step 2/2. Catalyzes the decarboxylation of orotidine 5'-monophosphate (OMP) to uridine 5'-monophosphate (UMP). The sequence is that of Orotidine 5'-phosphate decarboxylase from Lactobacillus johnsonii (strain CNCM I-12250 / La1 / NCC 533).